A 546-amino-acid chain; its full sequence is Probable protein kinase UbiB (546 aa).

Positions 124 to 502 (DFSVEPLASA…HVRQGQSRYL (379 aa)) constitute a Protein kinase domain. ATP is bound by residues 130–138 (LASASIAQV) and Lys-153. Asp-288 functions as the Proton acceptor in the catalytic mechanism. The next 2 helical transmembrane spans lie at 501–521 (YLFG…IHRP) and 522–542 (EWGM…LIGW).

It belongs to the ABC1 family. UbiB subfamily.

It is found in the cell inner membrane. It participates in cofactor biosynthesis; ubiquinone biosynthesis [regulation]. Is probably a protein kinase regulator of UbiI activity which is involved in aerobic coenzyme Q (ubiquinone) biosynthesis. The protein is Probable protein kinase UbiB of Klebsiella pneumoniae subsp. pneumoniae (strain ATCC 700721 / MGH 78578).